Here is a 5161-residue protein sequence, read N- to C-terminus: Nonribosomal peptide synthetase TES (5161 aa).

The interval 37–436 (EEQAIARPNA…GRKDSQTKVR (400 aa)) is adenylation 1. One can recognise a Carrier 1 domain in the interval 569-645 (QPETEKEQIL…KLTSAAIPSV (77 aa)). Residue serine 606 is modified to O-(pantetheine 4'-phosphoryl)serine. The condensation 1 stretch occupies residues 659–1098 (GHVAQSFAQG…LLCDVELSKL (440 aa)). The adenylation 2 stretch occupies residues 1122-1522 (RQQTSLCPSR…GRMDGQVKIR (401 aa)). Residues 1630–1742 (MNEWLDDTID…YLFKTTQQLL (113 aa)) form a methyltransferase (M) domain 1 region. Residues 2068-2141 (TRAESKIQQL…QLAAVAQEHV (74 aa)) form the Carrier 2 domain. Serine 2102 is subject to O-(pantetheine 4'-phosphoryl)serine. The condensation 2 stretch occupies residues 2179–2593 (EDIYPCSPLQ…MLTQDDEQQL (415 aa)). Residues 2614–3010 (DQAKSRPEAD…GRKDGQVKVR (397 aa)) are adenylation 3. Positions 3139-3215 (KPETKHEMAL…RLANRLVDPP (77 aa)) constitute a Carrier 3 domain. Serine 3176 is modified (O-(pantetheine 4'-phosphoryl)serine). The condensation 3 stretch occupies residues 3232 to 3668 (LQSFAQGRLW…VVPLMTVEAH (437 aa)). An adenylation 4 region spans residues 3694 to 4098 (FRQQAAMQPS…GRIDGQVKIR (405 aa)). The interval 4203–4329 (EMKEWLEETI…KVDGVKTLFF (127 aa)) is methyltransferase (M) domain 2. The Carrier 4 domain maps to 4643-4725 (RELSTAELKV…QFSQHEGEQK (83 aa)). Serine 4680 carries the post-translational modification O-(pantetheine 4'-phosphoryl)serine. Residues 4785 to 5093 (FFLNLGTRVD…HQNLNEHPEF (309 aa)) form a condensation 4 region.

This sequence belongs to the NRP synthetase family.

It participates in phytotoxin biosynthesis. Functionally, nonribosomal peptide synthetase; part of the gene cluster that mediates the biosynthesis of the phytotoxin tentoxin, an inhibitor the F1-ATPase activity of chloroplasts, resulting in chlorosis in sensitive plants. Tentoxin is a cyclic tetrapeptide that consists of four amino acid residues: glycine (Gly), alanine (Ala), leucine (Leu), and dehydrophenylalanine (DPhe). In addition, both the Ala and DPhe residues are N-methylated. The nonribosomal peptide synthetase TES assembles tentoxin from the four substrate amino acids. The adenylation domains of each of the 4 modules are responsible for the activation of Gly, Ala, Leu and DPhe, respectively. In addition, the N-methyltransferase domains in the second and fourth modules of TES could be responsible for N-methylation of Ala and DPhe residues. Finally, the condensation domain located in the termination module probably catalyzes the formation of the intramolecular macrocyclization and then the release of tentoxin. The cytochrome P450 monooxygenase TES1 is predicted to be involved in the formation of DPhe. The chain is Nonribosomal peptide synthetase TES from Alternaria alternata (Alternaria rot fungus).